Reading from the N-terminus, the 213-residue chain is Gas vesicle protein F1 (213 aa).

This sequence belongs to the gas vesicle GvpF/GvpL family. In terms of assembly, binds GvpA1 in early growth stages; is the only one of GvpF1 to GvpM1 that interacts with GvpA1 in H.volcanii experiments. GvpF to GvpM interact with each other in vitro, and may form multi-subunit complex(es). Interacts with GvpC1 and GvpO1.

The protein resides in the gas vesicle. It localises to the cytoplasm. Might be involved in preventing aggregation of GvpA1. Proteins GvpF to GvpM might be involved in nucleating gas vesicle formation. A minor component of the gas vesicle, also found in soluble extracts. Gas vesicles are hollow, gas filled proteinaceous nanostructures found in several microbial planktonic microorganisms. They allow positioning of halobacteria at the optimal depth for growth in the poorly aerated, shallow brine pools of their habitat. Functionally, expression of a 9.5 kb p-vac DNA fragment containing 2 divergently transcribed regions (gvpD-gvpE-gvpF-gvpG-gvpH-gvpI-gvpJ-gvpK-gvpL-gvpM and gvpA-gvpC-gvpN-gvpO) allows H.volcanii to produce gas vesicles. A minimal gas vesicle can be made in H.volcanii by gvpA1-gvpO1 plus gvpF1-gvpG1-gvpJ1-gvpK1-gvpL1-gvpM1; lack of enough GvpJ1 prevents formation. The same region restores gas vesicle production in H.halobium without the p-vac locus. This chain is Gas vesicle protein F1 (gvpF11), found in Halobacterium salinarum (strain ATCC 700922 / JCM 11081 / NRC-1) (Halobacterium halobium).